We begin with the raw amino-acid sequence, 152 residues long: Endoribonuclease YbeY (152 aa).

Zn(2+)-binding residues include His118, His122, and His128.

The protein belongs to the endoribonuclease YbeY family. Requires Zn(2+) as cofactor.

It localises to the cytoplasm. In terms of biological role, single strand-specific metallo-endoribonuclease involved in late-stage 70S ribosome quality control and in maturation of the 3' terminus of the 16S rRNA. In Pelotomaculum thermopropionicum (strain DSM 13744 / JCM 10971 / SI), this protein is Endoribonuclease YbeY.